The primary structure comprises 873 residues: Alanine--tRNA ligase (873 aa).

Zn(2+) is bound by residues His563, His567, Cys665, and His669.

This sequence belongs to the class-II aminoacyl-tRNA synthetase family. It depends on Zn(2+) as a cofactor.

The protein localises to the cytoplasm. The enzyme catalyses tRNA(Ala) + L-alanine + ATP = L-alanyl-tRNA(Ala) + AMP + diphosphate. Its function is as follows. Catalyzes the attachment of alanine to tRNA(Ala) in a two-step reaction: alanine is first activated by ATP to form Ala-AMP and then transferred to the acceptor end of tRNA(Ala). Also edits incorrectly charged Ser-tRNA(Ala) and Gly-tRNA(Ala) via its editing domain. This is Alanine--tRNA ligase from Parabacteroides distasonis (strain ATCC 8503 / DSM 20701 / CIP 104284 / JCM 5825 / NCTC 11152).